The sequence spans 138 residues: Large ribosomal subunit protein bL17 (138 aa).

Belongs to the bacterial ribosomal protein bL17 family. In terms of assembly, part of the 50S ribosomal subunit. Contacts protein L32.

The sequence is that of Large ribosomal subunit protein bL17 from Nitrobacter winogradskyi (strain ATCC 25391 / DSM 10237 / CIP 104748 / NCIMB 11846 / Nb-255).